Reading from the N-terminus, the 307-residue chain is Pantothenate kinase (307 aa).

ATP is bound at residue 90-97 (GSVAVGKS).

The protein belongs to the prokaryotic pantothenate kinase family.

The protein localises to the cytoplasm. The catalysed reaction is (R)-pantothenate + ATP = (R)-4'-phosphopantothenate + ADP + H(+). It functions in the pathway cofactor biosynthesis; coenzyme A biosynthesis; CoA from (R)-pantothenate: step 1/5. In Limosilactobacillus fermentum (strain NBRC 3956 / LMG 18251) (Lactobacillus fermentum), this protein is Pantothenate kinase.